A 122-amino-acid polypeptide reads, in one-letter code: MANFFVRLWESVFEPGTSPQLIIATHVSFVALLLTLIWLIYATNGNIHFYALFCISLLLWITVIWFINELSHVKLKDNDELDKDANKKDDSAIKEDSEDKQESGKSTSTARRTQAQSRSRKA.

At 1-20 the chain is on the cytoplasmic side; that stretch reads MANFFVRLWESVFEPGTSPQ. Residues 21-41 traverse the membrane as a helical segment; sequence LIIATHVSFVALLLTLIWLIY. At 42-46 the chain is on the lumenal side; that stretch reads ATNGN. The helical transmembrane segment at 47–67 threads the bilayer; that stretch reads IHFYALFCISLLLWITVIWFI. The Cytoplasmic segment spans residues 68 to 122; the sequence is NELSHVKLKDNDELDKDANKKDDSAIKEDSEDKQESGKSTSTARRTQAQSRSRKA. Basic and acidic residues predominate over residues 82–103; the sequence is DKDANKKDDSAIKEDSEDKQES. Residues 82-122 form a disordered region; the sequence is DKDANKKDDSAIKEDSEDKQESGKSTSTARRTQAQSRSRKA. The span at 104-122 shows a compositional bias: polar residues; sequence GKSTSTARRTQAQSRSRKA.

It belongs to the PKR1 family.

It is found in the endoplasmic reticulum membrane. Its function is as follows. Functions together with the other V-type ATPase assembly factors in the endoplasmic reticulum to efficiently assemble the V-type ATPase membrane sector V(0). The sequence is that of V-type ATPase assembly factor PKR1 (PKR1) from Saccharomyces cerevisiae (strain ATCC 204508 / S288c) (Baker's yeast).